Reading from the N-terminus, the 474-residue chain is Na(+)/H(+) antiporter NhaA 3 (474 aa).

The next 11 membrane-spanning stretches (helical) occupy residues 31–51 (VGGV…NIPA), 73–93 (LSVA…VAGI), 110–130 (AALP…VYTV), 141–161 (GWAV…AVIG), 171–191 (FLLT…AVFF), 194–214 (TLNF…WLLL), 220–240 (GWYV…NSGV), 280–300 (LAVP…GALA), 309–329 (LGVV…GTWL), 347–367 (VFAV…IGEL), and 378–398 (EVKA…TVLL).

Belongs to the NhaA Na(+)/H(+) (TC 2.A.33) antiporter family.

It localises to the cell membrane. It catalyses the reaction Na(+)(in) + 2 H(+)(out) = Na(+)(out) + 2 H(+)(in). Na(+)/H(+) antiporter that extrudes sodium in exchange for external protons. This Streptomyces coelicolor (strain ATCC BAA-471 / A3(2) / M145) protein is Na(+)/H(+) antiporter NhaA 3.